A 999-amino-acid chain; its full sequence is Cytoplasmic dynein 2 intermediate chain 1 (999 aa).

Composition is skewed to basic and acidic residues over residues 1–19, 29–138, 146–260, and 268–300; these read MEPG…DDLR, PKEE…EEIR, LLSR…EDRH, and GLHY…KELE. The tract at residues 1-350 is disordered; that stretch reads MEPGKRRTKD…EHEAREKAEE (350 aa). Phosphoserine is present on S250. The span at 318-338 shows a compositional bias: acidic residues; sequence LEDDFVDYEDDFEVCDGDDDS. The span at 339 to 350 shows a compositional bias: basic and acidic residues; that stretch reads NNEHEAREKAEE. Residues 416 to 495 are binding to the DYNLT2B-DYNLT1/DYNLT3 dimer; the sequence is ASHRQKSRSQ…DIQTEDIETR (80 aa). WD repeat units lie at residues 637 to 677, 718 to 764, 850 to 890, and 895 to 935; these read ICES…RIHH, AYKK…KADI, VRPI…PIMQ, and TSGH…LGPV.

This sequence belongs to the dynein light intermediate chain family. Intermediate chain of the cytoplasmic dynein complex 2, a multisubunit complex, composed at least of eleven different proteins. The cytoplasmic dynein 2 complex consists of two catalytic heavy chains (HCs) and a number of non-catalytic subunits presented by intermediate chains (ICs), light intermediate chains (LICs) and light chains (LCs). Among them, a heavy chain (DYNC2H1), two intermediate chains (DYNC2I2 and DYNC2I1), a light intermediate chain (DYNC2LI1), and a light chain (DYNLT2B) are unique to the cytoplasmic dynein complex 2, but a subset of the light chains are also shared by dynein-1 and dynein-2 complexes. Interacts with DYNC2I2; their C-terminal domains each bind a copy of the heavy chain, and their extended N-terminal regions are held together by an array of light chain dimers. Interacts with DYNLT2B. Interacts (via the N-terminal half) with DYNLT2B-DYNLT1 dimer or with DYNLT2B-DYNLT3 dimer; this interaction is crucial for retrograde trafficking of ciliary proteins.

The protein resides in the cell projection. It localises to the cilium. The protein localises to the cytoplasm. It is found in the cytoskeleton. Its subcellular location is the microtubule organizing center. The protein resides in the centrosome. Its function is as follows. Acts as one of several non-catalytic accessory components of the cytoplasmic dynein 2 complex (dynein-2 complex), a motor protein complex that drives the movement of cargos along microtubules within cilia and flagella in concert with the intraflagellar transport (IFT) system. DYNC2I1 plays a major role in retrograde ciliary protein trafficking in cilia and flagella. Also requires to maintain a functional transition zone. This is Cytoplasmic dynein 2 intermediate chain 1 (Dync2i1) from Mus musculus (Mouse).